Reading from the N-terminus, the 911-residue chain is Nitrate reductase [NADH], clone PBNBR1405 (911 aa).

The interval 1-68 is disordered; that stretch reads MATSVDNRHY…RFDSSDDEDE (68 aa). Residues 49 to 62 are compositionally biased toward basic and acidic residues; the sequence is KSVDKTTKEDRFDS. C191 provides a ligand contact to Mo-molybdopterin. The 76-residue stretch at 539–614 folds into the Cytochrome b5 heme-binding domain; the sequence is SKMYSMSEVR…LEDYRIGELI (76 aa). Residues H574 and H597 each coordinate heme. The FAD-binding FR-type domain maps to 654–766; it reads REKVPVKLIE…KGPLGHIEYQ (113 aa). FAD is bound by residues 706 to 709, 723 to 727, F728, F735, 740 to 742, and T793; these read RAYT, VIKVY, and LMS.

The protein belongs to the nitrate reductase family. In terms of assembly, homodimer. FAD serves as cofactor. The cofactor is heme. Mo-molybdopterin is required as a cofactor.

The enzyme catalyses nitrite + NAD(+) + H2O = nitrate + NADH + H(+). Functionally, nitrate reductase is a key enzyme involved in the first step of nitrate assimilation in plants, fungi and bacteria. The polypeptide is Nitrate reductase [NADH], clone PBNBR1405 (NIA1) (Brassica napus (Rape)).